Here is an 818-residue protein sequence, read N- to C-terminus: Patatin-like phospholipase domain-containing protein YALI0D16379g (818 aa).

2 disordered regions span residues 1–50 (MLKL…RDVN) and 154–178 (EEKR…KTKE). Positions 22 to 38 (SQQLTLDSPEGSETSSR) are enriched in polar residues. Basic and acidic residues predominate over residues 164–178 (KDKEGSEGDKTKTKE). Residues 223–243 (WPALFFIGMWLLFLTTIYASV) traverse the membrane as a helical segment. A PNPLA domain is found at 398 to 589 (LCLSGGGCFA…RTDIPVDALN (192 aa)). Positions 429 to 433 (GTSGG) match the GXSXG motif. Ser431 acts as the Nucleophile in catalysis. Residue Asp576 is the Proton acceptor of the active site. The tract at residues 781–805 (AGTDISSSNSDYDHEPQWEMDEGDS) is disordered.

The protein belongs to the PLPL family.

It localises to the membrane. Probable lipid hydrolase. The polypeptide is Patatin-like phospholipase domain-containing protein YALI0D16379g (Yarrowia lipolytica (strain CLIB 122 / E 150) (Yeast)).